The sequence spans 368 residues: H-2 class I histocompatibility antigen, K-D alpha chain (368 aa).

The signal sequence occupies residues 1–21 (MAPCTLLLLLAAALAPTQTRA). The interval 22-111 (GPHSLRYFVT…AQRYYNQSKG (90 aa)) is alpha-1. At 22–305 (GPHSLRYFVT…KLPPSTVSNT (284 aa)) the chain is on the extracellular side. Residue Asn-107 is glycosylated (N-linked (GlcNAc...) asparagine). Residues 112-203 (GSHTFQRMFG…ELGNETLLRT (92 aa)) are alpha-2. Residues Cys-122 and Cys-185 are joined by a disulfide bond. 2 N-linked (GlcNAc...) asparagine glycosylation sites follow: Asn-197 and Asn-277. Positions 204–295 (DSPKAHVTYH…GLPEPLTLRW (92 aa)) are alpha-3. The 89-residue stretch at 206–294 (PKAHVTYHPR…KGLPEPLTLR (89 aa)) folds into the Ig-like C1-type domain. Cys-224 and Cys-280 form a disulfide bridge. The connecting peptide stretch occupies residues 296 to 305 (KLPPSTVSNT). The helical transmembrane segment at 306-328 (VIIAVLVVLGAAIVTGAVVAFVM) threads the bilayer. At 329 to 368 (KMRRNTGGKGVNYALAPGSQTSDLSLPDGKVMVHDPHSLA) the chain is on the cytoplasmic side. Phosphoserine is present on residues Ser-350 and Ser-353.

The protein belongs to the MHC class I family. Heterodimer of an alpha chain and a beta chain (beta-2-microglobulin).

The protein localises to the membrane. Functionally, involved in the presentation of foreign antigens to the immune system. This Mus musculus (Mouse) protein is H-2 class I histocompatibility antigen, K-D alpha chain (H2-K1).